A 233-amino-acid polypeptide reads, in one-letter code: Phosphoribosylformylglycinamidine synthase subunit PurQ (233 aa).

One can recognise a Glutamine amidotransferase type-1 domain in the interval 3-233; sequence AAILVFPGIN…GLAQHLEKAA (231 aa). Residue cysteine 87 is the Nucleophile of the active site. Active-site residues include histidine 204 and glutamate 206.

In terms of assembly, part of the FGAM synthase complex composed of 1 PurL, 1 PurQ and 2 PurS subunits.

It is found in the cytoplasm. It carries out the reaction N(2)-formyl-N(1)-(5-phospho-beta-D-ribosyl)glycinamide + L-glutamine + ATP + H2O = 2-formamido-N(1)-(5-O-phospho-beta-D-ribosyl)acetamidine + L-glutamate + ADP + phosphate + H(+). The enzyme catalyses L-glutamine + H2O = L-glutamate + NH4(+). The protein operates within purine metabolism; IMP biosynthesis via de novo pathway; 5-amino-1-(5-phospho-D-ribosyl)imidazole from N(2)-formyl-N(1)-(5-phospho-D-ribosyl)glycinamide: step 1/2. Part of the phosphoribosylformylglycinamidine synthase complex involved in the purines biosynthetic pathway. Catalyzes the ATP-dependent conversion of formylglycinamide ribonucleotide (FGAR) and glutamine to yield formylglycinamidine ribonucleotide (FGAM) and glutamate. The FGAM synthase complex is composed of three subunits. PurQ produces an ammonia molecule by converting glutamine to glutamate. PurL transfers the ammonia molecule to FGAR to form FGAM in an ATP-dependent manner. PurS interacts with PurQ and PurL and is thought to assist in the transfer of the ammonia molecule from PurQ to PurL. The chain is Phosphoribosylformylglycinamidine synthase subunit PurQ from Bradyrhizobium diazoefficiens (strain JCM 10833 / BCRC 13528 / IAM 13628 / NBRC 14792 / USDA 110).